The chain runs to 600 residues: Phosphoenolpyruvate carboxykinase (ATP) (600 aa).

An ATP-binding site is contributed by 302-309 (GLSGTGKT).

This sequence belongs to the phosphoenolpyruvate carboxykinase (ATP) family.

It carries out the reaction oxaloacetate + ATP = phosphoenolpyruvate + ADP + CO2. It functions in the pathway carbohydrate biosynthesis; gluconeogenesis. The chain is Phosphoenolpyruvate carboxykinase (ATP) (acuF) from Emericella nidulans (strain FGSC A4 / ATCC 38163 / CBS 112.46 / NRRL 194 / M139) (Aspergillus nidulans).